The primary structure comprises 329 residues: Peroxidase 50 (329 aa).

Positions 1–25 (MVVVNKTNLLLLLLSLCLTLDLSSA) are cleaved as a signal peptide. Disulfide bonds link Cys36-Cys119, Cys69-Cys74, Cys125-Cys325, and Cys204-Cys236. His67 functions as the Proton acceptor in the catalytic mechanism. Asp68, Val71, Gly73, Asp75, and Ser77 together coordinate Ca(2+). Pro167 is a binding site for substrate. Heme b is bound at residue His197. Thr198 lines the Ca(2+) pocket. N-linked (GlcNAc...) asparagine glycosylation occurs at Asn215. Residues Asp249, Thr252, and Asp257 each coordinate Ca(2+).

The protein belongs to the peroxidase family. Classical plant (class III) peroxidase subfamily. Heme b is required as a cofactor. The cofactor is Ca(2+). Expressed in roots and leaves.

Its subcellular location is the secreted. The enzyme catalyses 2 a phenolic donor + H2O2 = 2 a phenolic radical donor + 2 H2O. Its function is as follows. Removal of H(2)O(2), oxidation of toxic reductants, biosynthesis and degradation of lignin, suberization, auxin catabolism, response to environmental stresses such as wounding, pathogen attack and oxidative stress. These functions might be dependent on each isozyme/isoform in each plant tissue. Exhibits a Ca(2+)-pectate binding affinity which could be interpreted in vivo as a specificity to interact with the pectic structure of the cell wall. This Arabidopsis thaliana (Mouse-ear cress) protein is Peroxidase 50 (PER50).